The primary structure comprises 245 residues: Folate receptor gamma (245 aa).

An N-terminal signal peptide occupies residues 1–22 (MDMAWQMMQLLLLALVTAAGSA). 8 disulfides stabilise this stretch: C37–C65, C57–C105, C66–C109, C89–C175, C96–C146, C135–C209, C139–C189, and C152–C169. Folate is bound by residues D103 and Y107. N121 carries N-linked (GlcNAc...) asparagine glycosylation. Residues 124–128 (WRKER), 157–162 (HKGWNW), and S196 contribute to the folate site. N161 carries an N-linked (GlcNAc...) asparagine glycan. The N-linked (GlcNAc...) asparagine glycan is linked to N201.

Belongs to the folate receptor family. As to expression, spleen, thymus, bone marrow, ovarian carcinoma, and uterine carcinoma.

It is found in the secreted. Functionally, binds to folate and reduced folic acid derivatives and mediates delivery of 5-methyltetrahydrofolate to the interior of cells. Isoform Short does not bind folate. The sequence is that of Folate receptor gamma (FOLR3) from Homo sapiens (Human).